Consider the following 315-residue polypeptide: Beta-ketoacyl-[acyl-carrier-protein] synthase III 2 (315 aa).

Catalysis depends on residues Cys-113 and His-241. An ACP-binding region spans residues Gln-242–Arg-246. Residue Asn-271 is part of the active site.

Belongs to the thiolase-like superfamily. FabH family. In terms of assembly, homodimer.

It is found in the cytoplasm. The enzyme catalyses malonyl-[ACP] + acetyl-CoA + H(+) = 3-oxobutanoyl-[ACP] + CO2 + CoA. Its pathway is lipid metabolism; fatty acid biosynthesis. In terms of biological role, catalyzes the condensation reaction of fatty acid synthesis by the addition to an acyl acceptor of two carbons from malonyl-ACP. Catalyzes the first condensation reaction which initiates fatty acid synthesis and may therefore play a role in governing the total rate of fatty acid production. Possesses both acetoacetyl-ACP synthase and acetyl transacylase activities. Its substrate specificity determines the biosynthesis of branched-chain and/or straight-chain of fatty acids. The protein is Beta-ketoacyl-[acyl-carrier-protein] synthase III 2 of Streptomyces avermitilis (strain ATCC 31267 / DSM 46492 / JCM 5070 / NBRC 14893 / NCIMB 12804 / NRRL 8165 / MA-4680).